The primary structure comprises 422 residues: Glutamyl-tRNA reductase (422 aa).

Substrate is bound by residues 49–52 (TCNR), S107, 112–114 (EPQ), and Q118. Residue C50 is the Nucleophile of the active site. 187 to 192 (GAGETI) contacts NADP(+).

It belongs to the glutamyl-tRNA reductase family. As to quaternary structure, homodimer.

The catalysed reaction is (S)-4-amino-5-oxopentanoate + tRNA(Glu) + NADP(+) = L-glutamyl-tRNA(Glu) + NADPH + H(+). It functions in the pathway porphyrin-containing compound metabolism; protoporphyrin-IX biosynthesis; 5-aminolevulinate from L-glutamyl-tRNA(Glu): step 1/2. In terms of biological role, catalyzes the NADPH-dependent reduction of glutamyl-tRNA(Glu) to glutamate 1-semialdehyde (GSA). The protein is Glutamyl-tRNA reductase of Pseudomonas aeruginosa (strain ATCC 15692 / DSM 22644 / CIP 104116 / JCM 14847 / LMG 12228 / 1C / PRS 101 / PAO1).